A 122-amino-acid chain; its full sequence is Elsinochromes biosynthesis cluster protein HP4 (122 aa).

Functionally, part of the gene cluster that mediates the biosynthesis of elsinochromes, pigments consisting of at least four interconvertible tautomers (A, B, C and D) that have a core phenolic quinone to which various side chains are attached and which play an important role in fungal pathogenesis. The non-reducing polyketide synthase PKS1 was proposed to iteratively catalyze decarboxylation between acetyl-CoA and malonyl-CoA subunits for polyketide chain elongation. The released polyketide undergoes cyclization to form an aromatic ring, and proceeds via serial modification steps to produce the heptaketide back- bone of elsinochrome. As elsinochrome has a symmetrical structure, two identical heptaketides are fused to form a core 1,2-dihydrobenzo-perylene ring structure, which can then be successively modified to produce the various derivatives of elsinochrome. Some of these reactions may be cooperatively carried out, at least in part, by the products of RDT1, OXR1 and PKS1. PRF1, embedded within the elsinochrome cluster possibly functions to stabilize some of the biosynthetic enzymes required for elsinochrome production. As prefoldin is a hexamer containing 2 a and 4 b subunits, additional prefoldin subunits, whose coding genes may not immediately link to the elsinochrome biosynthetic gene cluster, are required to fulfill the chaperone function. In addition, no methyltransferase-coding gene exists within the biosynthetic gene cluster, even though elsinochrome has four methyl groups at positions C3, C7, C8 and C12. Apparently, the identified gene cluster does not contain the entire entourage of genes responsible for elsinochrome biosynthesis. Once elsinochrome is synthesized, it must be exported outside the fungal cells, which is probably accomplished by the ECT1 transporter, to avoid toxicity. The polypeptide is Elsinochromes biosynthesis cluster protein HP4 (Elsinoe fawcettii (Citrus scab fungus)).